We begin with the raw amino-acid sequence, 291 residues long: ATP synthase gamma chain (291 aa).

This sequence belongs to the ATPase gamma chain family. As to quaternary structure, F-type ATPases have 2 components, CF(1) - the catalytic core - and CF(0) - the membrane proton channel. CF(1) has five subunits: alpha(3), beta(3), gamma(1), delta(1), epsilon(1). CF(0) has three main subunits: a, b and c.

Its subcellular location is the cell membrane. Its function is as follows. Produces ATP from ADP in the presence of a proton gradient across the membrane. The gamma chain is believed to be important in regulating ATPase activity and the flow of protons through the CF(0) complex. This Streptococcus equi subsp. zooepidemicus (strain MGCS10565) protein is ATP synthase gamma chain.